The chain runs to 69 residues: Cytochrome c oxidase assembly factor 3, mitochondrial (69 aa).

Over 1-19 (MNQGNQAFENARKPFRRAN) the chain is Mitochondrial matrix. The helical transmembrane segment at 20–42 (LITALGLGAFAFATFAYSVYRVH) threads the bilayer. Residues 43-69 (EDTFEDVVMTPELEKKIAEDRDLSKKN) lie on the Mitochondrial intermembrane side of the membrane.

Belongs to the COA3 family. In terms of assembly, component of 250-400 kDa complexes called cytochrome oxidase assembly intermediates or COA complexes.

The protein resides in the mitochondrion inner membrane. Functionally, required for assembly of cytochrome c oxidase (complex IV). The polypeptide is Cytochrome c oxidase assembly factor 3, mitochondrial (coa3) (Schizosaccharomyces pombe (strain 972 / ATCC 24843) (Fission yeast)).